The sequence spans 37 residues: Large ribosomal subunit protein bL36 (37 aa).

This sequence belongs to the bacterial ribosomal protein bL36 family.

This Psychromonas ingrahamii (strain DSM 17664 / CCUG 51855 / 37) protein is Large ribosomal subunit protein bL36.